A 258-amino-acid polypeptide reads, in one-letter code: Imidazole glycerol phosphate synthase subunit HisF (258 aa).

Catalysis depends on residues aspartate 11 and aspartate 130.

The protein belongs to the HisA/HisF family. As to quaternary structure, heterodimer of HisH and HisF.

It localises to the cytoplasm. The enzyme catalyses 5-[(5-phospho-1-deoxy-D-ribulos-1-ylimino)methylamino]-1-(5-phospho-beta-D-ribosyl)imidazole-4-carboxamide + L-glutamine = D-erythro-1-(imidazol-4-yl)glycerol 3-phosphate + 5-amino-1-(5-phospho-beta-D-ribosyl)imidazole-4-carboxamide + L-glutamate + H(+). It functions in the pathway amino-acid biosynthesis; L-histidine biosynthesis; L-histidine from 5-phospho-alpha-D-ribose 1-diphosphate: step 5/9. Its function is as follows. IGPS catalyzes the conversion of PRFAR and glutamine to IGP, AICAR and glutamate. The HisF subunit catalyzes the cyclization activity that produces IGP and AICAR from PRFAR using the ammonia provided by the HisH subunit. In Salmonella agona (strain SL483), this protein is Imidazole glycerol phosphate synthase subunit HisF.